We begin with the raw amino-acid sequence, 311 residues long: Pyrimidine-specific ribonucleoside hydrolase RihA (311 aa).

The active site involves histidine 240.

It belongs to the IUNH family. RihA subfamily.

In terms of biological role, hydrolyzes with equal efficiency cytidine or uridine to ribose and cytosine or uracil, respectively. This is Pyrimidine-specific ribonucleoside hydrolase RihA from Escherichia coli (strain ATCC 8739 / DSM 1576 / NBRC 3972 / NCIMB 8545 / WDCM 00012 / Crooks).